A 272-amino-acid chain; its full sequence is MTLKKLNLHLVSDSSGETVISVAKSALKHFRSVETIEYVWSFVKGEEQIDKILEEIERKSDEHNFVICTITDDGLRKYLKDNCIKLKIPYRAILSHIIREISSYLEIEKDEKLDLYTEINNEYFQRIEAINYTINHDDGQNIQDIDKADIILVGVSRTSKSPTSMYLAYRGYKVANVPFVSEIPFYVDLAKLRNKLTIGVTIDVRRLIEIRKNRLTSINNEGNNIYADPRKVEEEIKEAEEFFKQNNWPIIDVTQRSIEEVSATIIQYFNKI.

Residue 154 to 161 coordinates ADP; that stretch reads GVSRTSKS.

This sequence belongs to the pyruvate, phosphate/water dikinase regulatory protein family. PDRP subfamily.

The enzyme catalyses N(tele)-phospho-L-histidyl/L-threonyl-[pyruvate, phosphate dikinase] + ADP = N(tele)-phospho-L-histidyl/O-phospho-L-threonyl-[pyruvate, phosphate dikinase] + AMP + H(+). It carries out the reaction N(tele)-phospho-L-histidyl/O-phospho-L-threonyl-[pyruvate, phosphate dikinase] + phosphate + H(+) = N(tele)-phospho-L-histidyl/L-threonyl-[pyruvate, phosphate dikinase] + diphosphate. In terms of biological role, bifunctional serine/threonine kinase and phosphorylase involved in the regulation of the pyruvate, phosphate dikinase (PPDK) by catalyzing its phosphorylation/dephosphorylation. This chain is Putative pyruvate, phosphate dikinase regulatory protein, found in Wolbachia pipientis subsp. Culex pipiens (strain wPip).